The following is a 331-amino-acid chain: Cysteine and histidine-rich domain-containing protein 1 (331 aa).

Ala-2 is subject to N-acetylalanine. The segment at 2 to 77 is interaction with PPP5C; the sequence is ALLCYNRGCG…KPPEPVKPEV (76 aa). Cys-5, Cys-10, Cys-24, His-27, Cys-42, and Cys-43 together coordinate Zn(2+). CHORD domains are found at residues 5-64 and 157-216; these read CYNR…KGRH and CKNG…RGKH. Thr-47 carries the post-translational modification Phosphothreonine. A Phosphoserine modification is found at Ser-51. Residues Cys-59, His-64, Cys-157, Cys-162, Cys-176, His-179, Cys-194, Cys-195, Cys-211, and His-216 each coordinate Zn(2+). The segment at 62-82 is disordered; sequence GRHNSEKPPEPVKPEVKTTEK. Positions 64 to 82 are enriched in basic and acidic residues; the sequence is HNSEKPPEPVKPEVKTTEK. The interval 65-316 is interaction with HSP90AA1 and HSP90AB1; that stretch reads NSEKPPEPVK…AEPMQWASLE (252 aa). The CS domain occupies 227–316; the sequence is VVPCRHDWHQ…AEPMQWASLE (90 aa).

In terms of assembly, interacts with HSP90AA1, HSP90AB1, PPP5C, ROCK1 and ROCK2.

Regulates centrosome duplication, probably by inhibiting the kinase activity of ROCK2. Proposed to act as co-chaperone for HSP90. May play a role in the regulation of NOD1 via a HSP90 chaperone complex. In vitro, has intrinsic chaperone activity. This function may be achieved by inhibiting association of ROCK2 with NPM1. Plays a role in ensuring the localization of the tyrosine kinase receptor EGFR to the plasma membrane, and thus ensures the subsequent regulation of EGFR activity and EGF-induced actin cytoskeleton remodeling. Involved in stress response. Prevents tumorigenesis. This is Cysteine and histidine-rich domain-containing protein 1 (Chordc1) from Rattus norvegicus (Rat).